Reading from the N-terminus, the 221-residue chain is Large ribosomal subunit protein uL3 (221 aa).

The interval His131–Gly165 is disordered.

This sequence belongs to the universal ribosomal protein uL3 family. In terms of assembly, part of the 50S ribosomal subunit. Forms a cluster with proteins L14 and L19.

Its function is as follows. One of the primary rRNA binding proteins, it binds directly near the 3'-end of the 23S rRNA, where it nucleates assembly of the 50S subunit. The chain is Large ribosomal subunit protein uL3 from Phytoplasma australiense.